Reading from the N-terminus, the 1069-residue chain is RE1-silencing transcription factor (1069 aa).

An interaction with SIN3A region spans residues 32–121; that stretch reads DLHDLSKAEL…SLELSVVEPQ (90 aa). The tract at residues 43–57 is interaction with SIN3B; sequence APQLIMLANVALTGE. A disordered region spans residues 85–104; it reads SDSEGEGLEESAELKGDPSG. Positions 144-417 are interaction with ZFP90; sequence PVAEDKCKNL…KSKHPTCPSK (274 aa). Residues 158 to 180 form a C2H2-type 1 zinc finger; the sequence is FRCKPCQYEAESEEQFVHHIRVH. Positions 200-211 are required for binding to the neuron-restrictive silencer element; that stretch reads SGASPSEEGEFS. 7 C2H2-type zinc fingers span residues 215 to 237, 247 to 269, 275 to 297, 303 to 325, 331 to 354, 360 to 382, and 388 to 411; these read IRCDRCGYNTNRYDHYTAHLKHH, YKCIICTYTTVSEYHWRKHLRNH, YTCSKCNYFSTEKNNYVQHVRTH, YKCELCPYSSSQKTHLTRHMRTH, FKCDQCNYVASNQHEVTRHARQVH, LNCPHCDYKTADRSNFKKHVELH, and FNCPVCDYAASKKCNLQYHFKSKH. Disordered stretches follow at residues 425–737 and 830–1022; these read KLKK…MELP and KASK…GKEG. The segment covering 451–482 has biased composition (basic and acidic residues); sequence EQAKTKGVDASARRSERPVKGVGKDVPKEKKP. Residues 484-493 are compositionally biased toward polar residues; it reads SNASVVQVTT. Composition is skewed to basic and acidic residues over residues 498 to 511 and 554 to 576; these read SAVETKAAEGKHTD and ESKPKTSGEVPKGSRVEDRKADK. The segment covering 584 to 600 has biased composition (basic residues); that stretch reads KGGKKTALKTKTAKKGS. Residues 630–643 show a composition bias toward polar residues; that stretch reads AVVTPSGSTQTELS. Composition is skewed to pro residues over residues 679 to 706 and 713 to 734; these read PSPPQEPPQVEPPACVEPPPPVEPPCPM and PSPPMEPSQVEPPPHLEPPLPM. Composition is skewed to basic and acidic residues over residues 851 to 860 and 876 to 886; these read RREETPKDQE and GGTEEAGESRA. Residues 894-904 are compositionally biased toward low complexity; sequence STSALSSEQSS. The span at 930–943 shows a compositional bias: basic and acidic residues; that stretch reads TEQKTDRVPLKDSA. The residue at position 948 (Ser-948) is a Phosphoserine. Low complexity predominate over residues 957–968; it reads EAAAPAVVASPP. Residues 981-1059 are interaction with RCOR1; sequence EGIHSHDGSD…HLNRHLVNVY (79 aa). The C2H2-type 9 zinc-finger motif lies at 1032-1054; it reads FVCIFCDRSFRKEKDYSKHLNRH.

In terms of assembly, isoform 1 and isoform 6 form heterodimers. Isoform 6: Forms homodimers and homooligomers; binds to the neuron-restrictive silencer element (NRSE) as monomer. Interacts with SIN3A, SIN3B and RCOR1. Interacts with CDYL. Interacts with EHMT1 and EHMT2 only in the presence of CDYL. Part of a complex containing at least CDYL, REST, WIZ, SETB1, EHMT1 and EHMT2. Interacts (via zinc-finger DNA-binding domain) with ZFP90 (via N- and C-termini); the interaction inhibits REST repressor activity. Interacts (via C2H2-type zinc finger 5) with PRICKLE1. Interacts with FBXW11 and BTRC. Interacts with USP7. Post-translationally, O-glycosylated. Phosphorylated; phosphorylation is required for ubiquitination. In terms of processing, ubiquitinated; ubiquitination is mediated by BTRC and leads to proteasomal degradation in G2 phase. Ubiquitination increases during neuronal differentiation. Deubiquitinated by USP7; leading to its stabilization and promoting the maintenance of neural progenitor cells. As to expression, expressed in the hippocampus including the granule cell layer of the dentate gyrus, the pyramidal cell layers of CA1 and CA3, the apical and basilar dendrite layers of the stratum radiatum and stratum oriens of CA1, the stratum lucidum and stratum oriens of CA3 and in astroglia (at protein level). Expressed in the brain, with the highest levels in the neurons of hippocampus, pons/medulla and midbrain.

The protein localises to the nucleus. It localises to the cytoplasm. Its function is as follows. Transcriptional repressor which binds neuron-restrictive silencer element (NRSE) and represses neuronal gene transcription in non-neuronal cells. Restricts the expression of neuronal genes by associating with two distinct corepressors, SIN3A and RCOR1, which in turn recruit histone deacetylase to the promoters of REST-regulated genes. Mediates repression by recruiting the BHC complex at RE1/NRSE sites which acts by deacetylating and demethylating specific sites on histones, thereby acting as a chromatin modifier. Transcriptional repression by REST-CDYL via the recruitment of histone methyltransferase EHMT2 may be important in transformation suppression. Represses the expression of SRRM4 in non-neural cells to prevent the activation of neural-specific splicing events and to prevent production of REST isoform 6. Repressor activity may be inhibited by forming heterodimers with isoform 6, thereby preventing binding to NRSE or binding to corepressors and leading to derepression of target genes. Also maintains repression of neuronal genes in neural stem cells, and allows transcription and differentiation into neurons by dissociation from RE1/NRSE sites of target genes. Thereby is involved in maintaining the quiescent state of adult hippocampal neural stem cells and preventing premature differentiation into mature neurons. Plays a role in the developmental switch in synaptic NMDA receptor composition during postnatal development, by repressing GRIN2B expression and thereby altering NMDA receptor properties from containing primarily GRIN2B to primarily GRIN2A subunits. Acts as a regulator of osteoblast differentiation. Key repressor of gene expression in hypoxia; represses genes in hypoxia by direct binding to an RE1/NRSE site on their promoter regions. May also function in stress resistance in the brain during aging; possibly by regulating expression of genes involved in cell death and in the stress response. Repressor of gene expression in the hippocampus after ischemia by directly binding to RE1/NRSE sites and recruiting SIN3A and RCOR1 to promoters of target genes, thereby promoting changes in chromatin modifications and ischemia-induced cell death. After ischemia, might play a role in repression of miR-132 expression in hippocampal neurons, thereby leading to neuronal cell death. In terms of biological role, binds to the 3' region of the neuron-restrictive silencer element (NRSE), with lower affinity than full-length REST isoform 1. Exhibits weaker repressor activity compared to isoform 1. May negatively regulate the repressor activity of isoform 1 by binding to isoform 1, thereby preventing its binding to NRSE and leading to derepression of target genes. However, in another study, does not appear to be implicated in repressor activity of a NRSE motif-containing reporter construct nor in inhibitory activity on the isoform 1 transcriptional repressor activity. Post-transcriptional inactivation of REST by SRRM4-dependent alternative splicing into isoform 6 is required in mechanosensory hair cells in the inner ear for derepression of neuronal genes and hearing. This is RE1-silencing transcription factor (Rest) from Rattus norvegicus (Rat).